Here is a 1571-residue protein sequence, read N- to C-terminus: Phosphatidylinositol 3-kinase 1 (1571 aa).

Low complexity predominate over residues 1–73 (MNSIESSSND…NNDNNNNNNN (73 aa)). 3 disordered regions span residues 1 to 119 (MNSI…HVNN), 157 to 195 (GYDV…RTRN), and 283 to 430 (NSKL…IIKR). Basic and acidic residues predominate over residues 74–85 (IDKKRKDSKNKQ). Low complexity predominate over residues 101–119 (NSNDSNCSSGSSSGGHVNN). A compositionally biased stretch (basic and acidic residues) spans 283-292 (NSKLDTEEKP). Positions 294 to 324 (TTTTTTTTTSTSISTSTPTTTTTTTTNTSTT) are enriched in low complexity. Positions 325–337 (NDITIKPKTSPTK) are enriched in polar residues. Low complexity-rich tracts occupy residues 360–382 (KVST…PTGK) and 405–424 (NNTN…NNNN). In terms of domain architecture, PI3K-ABD spans 530–627 (IKTSFNILFL…IPKLKVIEKS (98 aa)). Positions 700 to 789 (GNKILISIFL…GTKPQLTLIQ (90 aa)) constitute a PI3K-RBD domain. The C2 PI3K-type domain maps to 851-1020 (IKKPFRVKVM…GLTLEFEEFN (170 aa)). The PIK helical domain occupies 1040 to 1216 (QPPTNINSNE…GILLESYLYA (177 aa)). Residues 1280 to 1558 (IINKSKYMDS…LIHESLATKT (279 aa)) enclose the PI3K/PI4K catalytic domain. A G-loop region spans residues 1286-1292 (YMDSKKL). Residues 1424–1432 (GIGDRHNDN) are catalytic loop. An activation loop region spans residues 1443–1469 (HIDFGHFLGNYKKKFGFKRERAPFVFT).

This sequence belongs to the PI3/PI4-kinase family.

The catalysed reaction is a 1,2-diacyl-sn-glycero-3-phospho-(1D-myo-inositol) + ATP = a 1,2-diacyl-sn-glycero-3-phospho-(1D-myo-inositol-3-phosphate) + ADP + H(+). This chain is Phosphatidylinositol 3-kinase 1 (pikA), found in Dictyostelium discoideum (Social amoeba).